The sequence spans 487 residues: Protein nucleotidyltransferase YdiU (487 aa).

ATP is bound by residues Gly90, Gly92, Arg93, Lys113, Asp125, Gly126, Arg176, and Arg183. Residue Asp252 is the Proton acceptor of the active site. 2 residues coordinate Mg(2+): Asn253 and Asp262. ATP is bound at residue Asp262.

The protein belongs to the SELO family. It depends on Mg(2+) as a cofactor. Requires Mn(2+) as cofactor.

The catalysed reaction is L-seryl-[protein] + ATP = 3-O-(5'-adenylyl)-L-seryl-[protein] + diphosphate. The enzyme catalyses L-threonyl-[protein] + ATP = 3-O-(5'-adenylyl)-L-threonyl-[protein] + diphosphate. It catalyses the reaction L-tyrosyl-[protein] + ATP = O-(5'-adenylyl)-L-tyrosyl-[protein] + diphosphate. It carries out the reaction L-histidyl-[protein] + UTP = N(tele)-(5'-uridylyl)-L-histidyl-[protein] + diphosphate. The catalysed reaction is L-seryl-[protein] + UTP = O-(5'-uridylyl)-L-seryl-[protein] + diphosphate. The enzyme catalyses L-tyrosyl-[protein] + UTP = O-(5'-uridylyl)-L-tyrosyl-[protein] + diphosphate. Nucleotidyltransferase involved in the post-translational modification of proteins. It can catalyze the addition of adenosine monophosphate (AMP) or uridine monophosphate (UMP) to a protein, resulting in modifications known as AMPylation and UMPylation. The protein is Protein nucleotidyltransferase YdiU of Pseudomonas fluorescens (strain SBW25).